Here is a 191-residue protein sequence, read N- to C-terminus: 3-isopropylmalate dehydratase small subunit (191 aa).

The protein belongs to the LeuD family. LeuD type 1 subfamily. In terms of assembly, heterodimer of LeuC and LeuD.

It carries out the reaction (2R,3S)-3-isopropylmalate = (2S)-2-isopropylmalate. The protein operates within amino-acid biosynthesis; L-leucine biosynthesis; L-leucine from 3-methyl-2-oxobutanoate: step 2/4. Catalyzes the isomerization between 2-isopropylmalate and 3-isopropylmalate, via the formation of 2-isopropylmaleate. This is 3-isopropylmalate dehydratase small subunit from Anaeromyxobacter dehalogenans (strain 2CP-1 / ATCC BAA-258).